The following is an 87-amino-acid chain: Large ribosomal subunit protein bL27 (87 aa).

Residues 1–26 (MAHKKGTGSTRNGRDSNSKRLGVKAY) are disordered.

It belongs to the bacterial ribosomal protein bL27 family.

This is Large ribosomal subunit protein bL27 from Prochlorococcus marinus (strain SARG / CCMP1375 / SS120).